A 407-amino-acid chain; its full sequence is Phosphopentomutase (407 aa).

Mn(2+) contacts are provided by aspartate 10, aspartate 306, histidine 311, aspartate 347, histidine 348, and histidine 359.

This sequence belongs to the phosphopentomutase family. It depends on Mn(2+) as a cofactor.

It localises to the cytoplasm. The enzyme catalyses 2-deoxy-alpha-D-ribose 1-phosphate = 2-deoxy-D-ribose 5-phosphate. It catalyses the reaction alpha-D-ribose 1-phosphate = D-ribose 5-phosphate. Its pathway is carbohydrate degradation; 2-deoxy-D-ribose 1-phosphate degradation; D-glyceraldehyde 3-phosphate and acetaldehyde from 2-deoxy-alpha-D-ribose 1-phosphate: step 1/2. Functionally, isomerase that catalyzes the conversion of deoxy-ribose 1-phosphate (dRib-1-P) and ribose 1-phosphate (Rib-1-P) to deoxy-ribose 5-phosphate (dRib-5-P) and ribose 5-phosphate (Rib-5-P), respectively. This chain is Phosphopentomutase, found in Escherichia coli (strain UTI89 / UPEC).